The following is a 360-amino-acid chain: Nicotinate-nucleotide--dimethylbenzimidazole phosphoribosyltransferase (360 aa).

Glutamate 327 serves as the catalytic Proton acceptor.

It belongs to the CobT family.

It catalyses the reaction 5,6-dimethylbenzimidazole + nicotinate beta-D-ribonucleotide = alpha-ribazole 5'-phosphate + nicotinate + H(+). The protein operates within nucleoside biosynthesis; alpha-ribazole biosynthesis; alpha-ribazole from 5,6-dimethylbenzimidazole: step 1/2. Functionally, catalyzes the synthesis of alpha-ribazole-5'-phosphate from nicotinate mononucleotide (NAMN) and 5,6-dimethylbenzimidazole (DMB). The chain is Nicotinate-nucleotide--dimethylbenzimidazole phosphoribosyltransferase from Shewanella baltica (strain OS223).